The primary structure comprises 508 residues: MTSTCTNSTRESNSSHTCMPLSKMPISLAHGIIRSTVLVIFLAASFVGNIVLALVLQRKPQLLQVTNRFIFNLLVTDLLQISLVAPWVVATSVPLFWPLNSHFCTALVSLTHLFAFASVNTIVVVSVDRYLSIIHPLSYPSKMTQRRGYLLLYGTWIVAILQSTPPLYGWGQAAFDERNALCSMIWGASPSYTILSVVSFIVIPLIVMIACYSVVFCAARRQHALLYNVKRHSLEVRVKDCVENEDEEGAEKKEEFQDESEFRRQHEGEVKAKEGRMEAKDGSLKAKEGSTGTSESSVEARGSEEVRESSTVASDGSMEGKEGSTKVEENSMKADKGRTEVNQCSIDLGEDDMEFGEDDINFSEDDVEAVNIPESLPPSRRNSNSNPPLPRCYQCKAAKVIFIIIFSYVLSLGPYCFLAVLAVWVDVETQVPQWVITIIIWLFFLQCCIHPYVYGYMHKTIKKEIQDMLKKFFCKEKPPKEDSHPDLPGTEGGTEGKIVPSYDSATFP.

At 1-35 (MTSTCTNSTRESNSSHTCMPLSKMPISLAHGIIRS) the chain is on the extracellular side. Asparagine 7 and asparagine 13 each carry an N-linked (GlcNAc...) asparagine glycan. A helical membrane pass occupies residues 36-56 (TVLVIFLAASFVGNIVLALVL). The Cytoplasmic segment spans residues 57–68 (QRKPQLLQVTNR). A helical transmembrane segment spans residues 69 to 89 (FIFNLLVTDLLQISLVAPWVV). Residues 90–106 (ATSVPLFWPLNSHFCTA) are Extracellular-facing. Cysteine 104 and cysteine 182 form a disulfide bridge. Residues 107-127 (LVSLTHLFAFASVNTIVVVSV) form a helical membrane-spanning segment. Topologically, residues 128–149 (DRYLSIIHPLSYPSKMTQRRGY) are cytoplasmic. Residues 150–170 (LLLYGTWIVAILQSTPPLYGW) traverse the membrane as a helical segment. Residues 171-196 (GQAAFDERNALCSMIWGASPSYTILS) lie on the Extracellular side of the membrane. A helical transmembrane segment spans residues 197–217 (VVSFIVIPLIVMIACYSVVFC). Residues 218–399 (AARRQHALLY…PRCYQCKAAK (182 aa)) lie on the Cytoplasmic side of the membrane. The segment at 244–338 (NEDEEGAEKK…ENSMKADKGR (95 aa)) is disordered. Basic and acidic residues-rich tracts occupy residues 250-288 (AEKKEEFQDESEFRRQHEGEVKAKEGRMEAKDGSLKAKE) and 318-338 (MEGKEGSTKVEENSMKADKGR). The chain crosses the membrane as a helical span at residues 400–420 (VIFIIIFSYVLSLGPYCFLAV). The Extracellular segment spans residues 421-433 (LAVWVDVETQVPQ). A helical transmembrane segment spans residues 434–454 (WVITIIIWLFFLQCCIHPYVY). Residues 455–508 (GYMHKTIKKEIQDMLKKFFCKEKPPKEDSHPDLPGTEGGTEGKIVPSYDSATFP) are Cytoplasmic-facing. The span at 476–485 (EKPPKEDSHP) shows a compositional bias: basic and acidic residues. A disordered region spans residues 476-508 (EKPPKEDSHPDLPGTEGGTEGKIVPSYDSATFP).

This sequence belongs to the G-protein coupled receptor 1 family.

It is found in the cell membrane. Its function is as follows. Orphan receptor. This is Probable G-protein coupled receptor 101 (GPR101) from Homo sapiens (Human).